The primary structure comprises 309 residues: G-protein coupled receptor 35 (309 aa).

Residues 1–24 (MNGTYNTCGSSDLTWPPAIKLGFY) are Extracellular-facing. An N-linked (GlcNAc...) asparagine glycan is attached at Asn-2. A helical membrane pass occupies residues 25 to 45 (AYLGVLLVLGLLLNSLALWVF). Residues 46 to 56 (CCRMQQWTETR) lie on the Cytoplasmic side of the membrane. The helical transmembrane segment at 57–77 (IYMTNLAVADLCLLCTLPFVL) threads the bilayer. Topologically, residues 78–90 (HSLRDTSDTPLCQ) are extracellular. The cysteines at positions 89 and 162 are disulfide-linked. The helical transmembrane segment at 91–112 (LSQGIYLTNRYMSISLVTAIAV) threads the bilayer. Residues 113 to 135 (DRYVAVRHPLRARGLRSPRQAAA) lie on the Cytoplasmic side of the membrane. A helical membrane pass occupies residues 136–156 (VCAVLWVLVIGSLVARWLLGI). Over 157 to 174 (QEGGFCFRSTRHNFNSMA) the chain is Extracellular. Residues 175–195 (FPLLGFYLPLAVVVFCSLKVV) traverse the membrane as a helical segment. Topologically, residues 196–218 (TALAQRPPTDVGQAEATRKAARM) are cytoplasmic. A helical membrane pass occupies residues 219–239 (VWANLLVFVVCFLPLHVGLTV). Residues 240 to 258 (RLAVGWNACALLETIRRAL) are Extracellular-facing. Residues 259–279 (YITSKLSDANCCLDAICYYYM) form a helical membrane-spanning segment. Residues 280 to 309 (AKEFQEASALAVAPSAKAHKSQDSLCVTLA) lie on the Cytoplasmic side of the membrane. Phosphoserine occurs at positions 287 and 294. Ser-300 and Ser-303 each carry phosphoserine; by GRK5 and GRK6. The residue at position 307 (Thr-307) is a Phosphothreonine.

This sequence belongs to the G-protein coupled receptor 1 family. Interacts with GNA13. Interacts with ARRB2. Multiply phosphorylated in clusters of serines and threonines in the C-terminal tail. Phosphorylation of Ser-300 and Ser-303 is mediated by GRK5 and/or GRK6. Predominantly expressed in immune and gastrointestinal tissues.

It localises to the cell membrane. Functionally, G-protein coupled receptor that binds to several ligands including the tryptophan metabolite kynurenic acid (KYNA), lysophosphatidic acid (LPA) or 5-hydroxyindoleacetic acid (5-HIAA) with high affinity, leading to rapid and transient activation of numerous intracellular signaling pathways. Plays a role in neutrophil recruitment to sites of inflammation and bacterial clearance through the major serotonin metabolite 5-HIAA that acts as a physiological ligand. Stimulates lipid metabolism, thermogenic, and anti-inflammatory gene expression in adipose tissue once activated by kynurenic acid. In macrophages, activation by lysophosphatidic acid promotes GPR35-induced signaling with a distinct transcriptional profile characterized by TNF production associated with ERK and NF-kappa-B activation. In turn, induces chemotaxis of macrophages. The sequence is that of G-protein coupled receptor 35 (GPR35) from Homo sapiens (Human).